We begin with the raw amino-acid sequence, 271 residues long: Protein FANTASTIC FOUR 1 (271 aa).

An FAF domain is found at 114 to 168 (NSFPPPLNSVNGFNNSRMVKSYKEDGRLVVQAIRVCSPPRCFVSERREGRLRLCL). The disordered stretch occupies residues 174–255 (NSQDAEEEFE…KRRCNENGCE (82 aa)). The span at 177–224 (DAEEEFEEEDEDDQYDAEEEEEEEEEEEEEEEEEEEEEEEEEEEDEEG) shows a compositional bias: acidic residues. The span at 237-247 (GNKKVSNRPKR) shows a compositional bias: basic residues.

This sequence belongs to the fantastic four family. In terms of tissue distribution, expressed in the shoot apex, stamens, anthers and young siliques. Detected in provascular and vascular tissue.

Able to repress WUS when constitutively overexpressed, but have no effect on CLV3. This is Protein FANTASTIC FOUR 1 (FAF1) from Arabidopsis thaliana (Mouse-ear cress).